A 284-amino-acid polypeptide reads, in one-letter code: MCNTPTYCDLGKAAKDVFNKGYGFGMVKIDLKTKSCSGVMEFSTSGHAYTDTGKASGNLETKYKVRNYGLTFTQKWNTDNTLGTEISWENKLAEGLKLTLDTIFVPNTGKKSGKLKASYKRDCFSVGSNVDIDFSGPTIYGWAVLAFEGWLAGYQMSFDTAKSKLSQNNFALGYKAADFQLHTHVNDGTEFGGSIYQKVNEKIETSINLAWTAGSNNTRFGIAAKYMLDCRTSLSAKVNNASLIGLGYTQTLRPGVKLTLSALIDGKNFSAGGHKVGLGFELEA.

The residue at position 2 (cysteine 2) is an N-acetylcysteine. At threonine 4 the chain carries Phosphothreonine. N6-acetyllysine occurs at positions 12, 15, and 20. The next 2 beta stranded transmembrane spans lie at 26 to 35 (MVKIDLKTKS) and 39 to 48 (VMEFSTSGHA). Lysine 54 participates in a covalent cross-link: Glycyl lysine isopeptide (Lys-Gly) (interchain with G-Cter in ubiquitin). 3 consecutive transmembrane segments (beta stranded) span residues 55-65 (ASGNLETKYKV), 70-77 (LTFTQKWN), and 81-90 (TLGTEISWEN). N6-acetyllysine is present on lysine 91. A beta stranded transmembrane segment spans residues 96–105 (LKLTLDTIFV). Residues lysine 110 and lysine 111 each participate in a glycyl lysine isopeptide (Lys-Gly) (interchain with G-Cter in ubiquitin) cross-link. A run of 10 beta stranded transmembrane segments spans residues 112–121 (SGKLKASYKR), 124–131 (FSVGSNVD), 138–146 (TIYGWAVLA), 151–159 (LAGYQMSFD), 164–176 (KLSQ…GYKA), 179–186 (FQLHTHVN), 190–199 (EFGGSIYQKV), 203–212 (IETSINLAWT), 219–228 (RFGIAAKYML), and 232–239 (TSLSAKVN). Serine 242 is subject to Phosphoserine. Residues 243-245 (LIG) and 261-265 (SALID) each bind NAD(+). 2 beta stranded membrane-spanning segments follow: residues 243 to 252 (LIGLGYTQTL) and 255 to 264 (GVKLTLSALI). Lysine 267 is modified (N6-acetyllysine; alternate). Lysine 267 participates in a covalent cross-link: Glycyl lysine isopeptide (Lys-Gly) (interchain with G-Cter in ubiquitin); alternate. A beta stranded membrane pass occupies residues 274-283 (HKVGLGFELE).

The protein belongs to the eukaryotic mitochondrial porin family. As to quaternary structure, interacts with ARMC12 in a TBC1D21-dependent manner. Interacts with MISFA. Post-translationally, ubiquitinated by PRKN during mitophagy, leading to its degradation and enhancement of mitophagy. Deubiquitinated by USP30.

The protein resides in the mitochondrion outer membrane. It localises to the membrane. It carries out the reaction chloride(in) = chloride(out). It catalyses the reaction K(+)(in) = K(+)(out). Its function is as follows. Non-selective voltage-gated ion channel that mediates the transport of anions and cations through the mitochondrion outer membrane and plasma membrane. Forms a high-conducting channel with a stable open state and a voltage-induced closure with a mild preference for anions over cations. Involved in male fertility and sperm mitochondrial sheath formation. This chain is Non-selective voltage-gated ion channel VDAC3, found in Pongo abelii (Sumatran orangutan).